A 418-amino-acid chain; its full sequence is Light-independent protochlorophyllide reductase subunit N (418 aa).

[4Fe-4S] cluster-binding residues include Cys-17, Cys-42, and Cys-103.

Belongs to the BchN/ChlN family. As to quaternary structure, protochlorophyllide reductase is composed of three subunits; ChlL, ChlN and ChlB. Forms a heterotetramer of two ChlB and two ChlN subunits. Requires [4Fe-4S] cluster as cofactor.

The enzyme catalyses chlorophyllide a + oxidized 2[4Fe-4S]-[ferredoxin] + 2 ADP + 2 phosphate = protochlorophyllide a + reduced 2[4Fe-4S]-[ferredoxin] + 2 ATP + 2 H2O. It functions in the pathway porphyrin-containing compound metabolism; chlorophyll biosynthesis (light-independent). In terms of biological role, component of the dark-operative protochlorophyllide reductase (DPOR) that uses Mg-ATP and reduced ferredoxin to reduce ring D of protochlorophyllide (Pchlide) to form chlorophyllide a (Chlide). This reaction is light-independent. The NB-protein (ChlN-ChlB) is the catalytic component of the complex. In Prochlorococcus marinus subsp. pastoris (strain CCMP1986 / NIES-2087 / MED4), this protein is Light-independent protochlorophyllide reductase subunit N.